The following is a 104-amino-acid chain: Flagellar hook-basal body complex protein FliE (104 aa).

Belongs to the FliE family.

Its subcellular location is the bacterial flagellum basal body. The sequence is that of Flagellar hook-basal body complex protein FliE from Salmonella newport (strain SL254).